A 507-amino-acid polypeptide reads, in one-letter code: Glycerol kinase (507 aa).

Position 13 (Thr13) interacts with ADP. Residues Thr13, Thr14, and Ser15 each contribute to the ATP site. Thr13 lines the sn-glycerol 3-phosphate pocket. Arg17 contributes to the ADP binding site. 4 residues coordinate sn-glycerol 3-phosphate: Arg83, Glu84, Tyr135, and Asp245. 5 residues coordinate glycerol: Arg83, Glu84, Tyr135, Asp245, and Gln246. Residues Thr267 and Gly310 each contribute to the ADP site. ATP is bound by residues Thr267, Gly310, Gln314, and Gly411. ADP contacts are provided by Gly411 and Asn415.

Belongs to the FGGY kinase family.

The enzyme catalyses glycerol + ATP = sn-glycerol 3-phosphate + ADP + H(+). It participates in polyol metabolism; glycerol degradation via glycerol kinase pathway; sn-glycerol 3-phosphate from glycerol: step 1/1. Its activity is regulated as follows. Inhibited by fructose 1,6-bisphosphate (FBP). Key enzyme in the regulation of glycerol uptake and metabolism. Catalyzes the phosphorylation of glycerol to yield sn-glycerol 3-phosphate. The sequence is that of Glycerol kinase from Halorhodospira halophila (strain DSM 244 / SL1) (Ectothiorhodospira halophila (strain DSM 244 / SL1)).